Consider the following 124-residue polypeptide: Urotensin-2 (124 aa).

Residues 1 to 20 (MYKLASCCLLFIGFLNPLLS) form the signal peptide. Residues 21 to 110 (LPLLDSREIS…HLLARIWKPY (90 aa)) constitute a propeptide that is removed on maturation. Cys-118 and Cys-123 form a disulfide bridge.

It belongs to the urotensin-2 family. Brain specific.

The protein localises to the secreted. Functionally, highly potent vasoconstrictor. The chain is Urotensin-2 (UTS2) from Homo sapiens (Human).